Here is a 499-residue protein sequence, read N- to C-terminus: Rhamnogalacturonan I rhamnosyltransferase 1 (499 aa).

The chain crosses the membrane as a helical; Signal-anchor for type II membrane protein span at residues 31–50 (WFVRVCSSILVWTCLVQLFA). N-linked (GlcNAc...) asparagine glycosylation is found at Asn88, Asn121, and Asn207. 261-263 (HLR) is a binding site for substrate. 3 N-linked (GlcNAc...) asparagine glycosylation sites follow: Asn375, Asn435, and Asn496.

It belongs to the glycosyltransferase GT106 family.

It is found in the golgi apparatus membrane. It carries out the reaction alpha-D-galacturonosyl-[(1-&gt;2)-alpha-L-rhamnosyl-(1-&gt;4)-alpha-D-galacturonosyl](n) + UDP-beta-L-rhamnose = [(1-&gt;2)-alpha-L-rhamnosyl-(1-&gt;4)-alpha-D-galacturonosyl](n+1) + UDP + H(+). The protein operates within glycan metabolism; pectin biosynthesis. Glycosyltransferase involved in the formation of rhamnogalacturonan I (RG-I) oligosaccharides in the seed coat mucilage, which is a specialized cell wall with abundant RG-I. Transfers the rhamnose residue from UDP-beta-L-rhamnose to RG-I oligosaccharides. This is Rhamnogalacturonan I rhamnosyltransferase 1 from Arabidopsis thaliana (Mouse-ear cress).